Reading from the N-terminus, the 435-residue chain is 3-phosphoshikimate 1-carboxyvinyltransferase (435 aa).

3-phosphoshikimate-binding residues include lysine 28, serine 29, and arginine 33. Lysine 28 contacts phosphoenolpyruvate. Phosphoenolpyruvate is bound by residues glycine 100 and arginine 128. The 3-phosphoshikimate site is built by serine 173, glutamine 175, aspartate 321, and lysine 348. Glutamine 175 is a binding site for phosphoenolpyruvate. Aspartate 321 functions as the Proton acceptor in the catalytic mechanism. Arginine 352 and arginine 394 together coordinate phosphoenolpyruvate.

This sequence belongs to the EPSP synthase family. Monomer.

It localises to the cytoplasm. It carries out the reaction 3-phosphoshikimate + phosphoenolpyruvate = 5-O-(1-carboxyvinyl)-3-phosphoshikimate + phosphate. It functions in the pathway metabolic intermediate biosynthesis; chorismate biosynthesis; chorismate from D-erythrose 4-phosphate and phosphoenolpyruvate: step 6/7. Catalyzes the transfer of the enolpyruvyl moiety of phosphoenolpyruvate (PEP) to the 5-hydroxyl of shikimate-3-phosphate (S3P) to produce enolpyruvyl shikimate-3-phosphate and inorganic phosphate. The protein is 3-phosphoshikimate 1-carboxyvinyltransferase of Desulfitobacterium hafniense (strain DSM 10664 / DCB-2).